The following is a 208-amino-acid chain: NADH-ubiquinone oxidoreductase chain 4 (208 aa).

6 helical membrane passes run 23–43 (VWINVTTYSLLINLISINLLW), 60–80 (PLSAPLLVLTTWLLPLMLLAS), 93–113 (KLYISLLVCLQTLLIMTFSAN), 114–134 (ELIMFYILFEATLIPTLIIIT), 147–167 (IYFLFYTLVGSIPLLIALIYI), and 185–205 (PINQTWSNNILWLACIMAFMV).

It belongs to the complex I subunit 4 family. As to quaternary structure, core subunit of respiratory chain NADH dehydrogenase (Complex I) which is composed of 45 different subunits.

Its subcellular location is the mitochondrion inner membrane. The catalysed reaction is a ubiquinone + NADH + 5 H(+)(in) = a ubiquinol + NAD(+) + 4 H(+)(out). In terms of biological role, core subunit of the mitochondrial membrane respiratory chain NADH dehydrogenase (Complex I) which catalyzes electron transfer from NADH through the respiratory chain, using ubiquinone as an electron acceptor. Essential for the catalytic activity and assembly of complex I. This chain is NADH-ubiquinone oxidoreductase chain 4 (MT-ND4), found in Microtus pennsylvanicus (Meadow vole).